The following is a 326-amino-acid chain: Biotin synthase (326 aa).

In terms of domain architecture, Radical SAM core spans 51–275 (NAVQRSTLLS…MMPTSFVRLS (225 aa)). 3 residues coordinate [4Fe-4S] cluster: C66, C70, and C73. [2Fe-2S] cluster is bound by residues C110, C141, C201, and R273.

Belongs to the radical SAM superfamily. Biotin synthase family. As to quaternary structure, homodimer. [4Fe-4S] cluster serves as cofactor. Requires [2Fe-2S] cluster as cofactor.

The catalysed reaction is (4R,5S)-dethiobiotin + (sulfur carrier)-SH + 2 reduced [2Fe-2S]-[ferredoxin] + 2 S-adenosyl-L-methionine = (sulfur carrier)-H + biotin + 2 5'-deoxyadenosine + 2 L-methionine + 2 oxidized [2Fe-2S]-[ferredoxin]. Its pathway is cofactor biosynthesis; biotin biosynthesis; biotin from 7,8-diaminononanoate: step 2/2. Its function is as follows. Catalyzes the conversion of dethiobiotin (DTB) to biotin by the insertion of a sulfur atom into dethiobiotin via a radical-based mechanism. The protein is Biotin synthase of Aromatoleum aromaticum (strain DSM 19018 / LMG 30748 / EbN1) (Azoarcus sp. (strain EbN1)).